The primary structure comprises 307 residues: Ribonuclease Z (307 aa).

Zn(2+)-binding residues include His63, His65, Asp67, His68, His141, Asp212, and His270. Asp67 functions as the Proton acceptor in the catalytic mechanism.

It belongs to the RNase Z family. In terms of assembly, homodimer. Requires Zn(2+) as cofactor.

It carries out the reaction Endonucleolytic cleavage of RNA, removing extra 3' nucleotides from tRNA precursor, generating 3' termini of tRNAs. A 3'-hydroxy group is left at the tRNA terminus and a 5'-phosphoryl group is left at the trailer molecule.. Functionally, zinc phosphodiesterase, which displays some tRNA 3'-processing endonuclease activity. Probably involved in tRNA maturation, by removing a 3'-trailer from precursor tRNA. The chain is Ribonuclease Z from Bacillus cereus (strain B4264).